The chain runs to 171 residues: Deoxyuridine 5'-triphosphate nucleotidohydrolase (171 aa).

E143 is a Mg(2+) binding site.

It belongs to the dUTPase family. As to quaternary structure, homotrimer. The cofactor is Mg(2+).

The enzyme catalyses dUTP + H2O = dUMP + diphosphate + H(+). It functions in the pathway pyrimidine metabolism; dUMP biosynthesis; dUMP from dCTP (dUTP route): step 2/2. In terms of biological role, this enzyme is involved in nucleotide metabolism: it produces dUMP, the immediate precursor of thymidine nucleotides and it decreases the intracellular concentration of dUTP, preventing uracil incorporation into DNA. In Oryza sativa subsp. japonica (Rice), this protein is Deoxyuridine 5'-triphosphate nucleotidohydrolase (DUT).